We begin with the raw amino-acid sequence, 767 residues long: Cilium assembly protein DZIP1L (767 aa).

Residues glutamine 122 to arginine 144 are disordered. Residues arginine 131 to arginine 144 show a composition bias toward basic and acidic residues. The C2H2-type zinc-finger motif lies at histidine 166–histidine 189. Residues valine 205 to serine 406 adopt a coiled-coil conformation. Residue serine 426 is modified to Phosphoserine. A disordered region spans residues serine 518–tryptophan 767. 2 stretches are compositionally biased toward polar residues: residues proline 533–valine 547 and arginine 574–serine 588. Positions glycine 607–serine 616 are enriched in low complexity. The segment covering glutamate 658 to valine 675 has biased composition (polar residues). Residues asparagine 677–alanine 686 are compositionally biased toward basic and acidic residues.

This sequence belongs to the DZIP C2H2-type zinc-finger protein family. Interacts with SEPTIN2.

It is found in the cytoplasm. The protein localises to the cytoskeleton. Its subcellular location is the cilium basal body. It localises to the microtubule organizing center. The protein resides in the centrosome. It is found in the centriole. Involved in primary cilium formation. Probably acts as a transition zone protein required for localization of PKD1/PC1 and PKD2/PC2 to the ciliary membrane. The protein is Cilium assembly protein DZIP1L of Homo sapiens (Human).